The primary structure comprises 156 residues: Small ribosomal subunit protein uS7 (156 aa).

This sequence belongs to the universal ribosomal protein uS7 family. Part of the 30S ribosomal subunit. Contacts proteins S9 and S11.

In terms of biological role, one of the primary rRNA binding proteins, it binds directly to 16S rRNA where it nucleates assembly of the head domain of the 30S subunit. Is located at the subunit interface close to the decoding center, probably blocks exit of the E-site tRNA. The chain is Small ribosomal subunit protein uS7 from Erwinia tasmaniensis (strain DSM 17950 / CFBP 7177 / CIP 109463 / NCPPB 4357 / Et1/99).